Consider the following 427-residue polypeptide: Succinate--CoA ligase [ADP-forming] subunit beta, mitochondrial (427 aa).

The transit peptide at 1–30 (MYSRKSLSLISKCGQLSRLNAQAALQARRH) directs the protein to the mitochondrion. In terms of domain architecture, ATP-grasp spans 39–284 (AQLLREYGIG…LSQEDPDEVK (246 aa)). ATP-binding positions include Lys-76 and 83-85 (GRG). Ser-102 bears the Phosphoserine mark. ATP is bound at residue Glu-144. Residues Asn-236 and Asp-253 each coordinate Mg(2+). 2 positions are modified to phosphoserine: Ser-263 and Ser-276. Residues Asn-304 and 361 to 363 (GIV) each bind substrate.

It belongs to the succinate/malate CoA ligase beta subunit family. Heterodimer of an alpha and a beta subunit. Mg(2+) serves as cofactor.

It is found in the mitochondrion. It carries out the reaction succinate + ATP + CoA = succinyl-CoA + ADP + phosphate. It participates in carbohydrate metabolism; tricarboxylic acid cycle; succinate from succinyl-CoA (ligase route): step 1/1. Functionally, succinyl-CoA synthetase functions in the citric acid cycle (TCA), coupling the hydrolysis of succinyl-CoA to the synthesis of ATP and thus represents the only step of substrate-level phosphorylation in the TCA. The beta subunit provides nucleotide specificity of the enzyme and binds the substrate succinate, while the binding sites for coenzyme A and phosphate are found in the alpha subunit. The protein is Succinate--CoA ligase [ADP-forming] subunit beta, mitochondrial of Saccharomyces cerevisiae (strain ATCC 204508 / S288c) (Baker's yeast).